Consider the following 408-residue polypeptide: Ribonuclease T2-like (408 aa).

Positions 1–25 (MLQSIPGPQHILKALTGSLGLSTIF) are cleaved as a signal peptide. 4 disulfide bridges follow: C38–C56, C45–C92, C55–C158, and C100–C150. The active site involves H85. N-linked (GlcNAc...) asparagine glycosylation is present at N108. Catalysis depends on residues E143 and H147. Residue N173 is glycosylated (N-linked (GlcNAc...) asparagine). C222 and C257 are disulfide-bonded. The disordered stretch occupies residues 268 to 292 (KHREPSRTTDTPSQPTTTGTPFKGR). A compositionally biased stretch (low complexity) spans 275–288 (TTDTPSQPTTTGTP). N372 carries an N-linked (GlcNAc...) asparagine glycan.

It belongs to the RNase T2 family.

Its subcellular location is the vacuole lumen. The protein resides in the cytoplasm. It carries out the reaction a ribonucleotidyl-ribonucleotide-RNA + H2O = a 3'-end 3'-phospho-ribonucleotide-RNA + a 5'-end dephospho-ribonucleoside-RNA + H(+). Its function is as follows. Rnase which modulates cell survival under stress conditions. Released from the vacuole to the cytoplasm during stress to promote tRNA and rRNA cleavage and to activate separately a downstream pathway that promotes cell death. Involved in cell size, vacuolar morphology and growth at high temperatures and high salt concentration. The protein is Ribonuclease T2-like (rny1) of Aspergillus fumigatus (strain ATCC MYA-4609 / CBS 101355 / FGSC A1100 / Af293) (Neosartorya fumigata).